The following is a 138-amino-acid chain: Superoxide dismutase [Mn] (138 aa).

Residues His1, His49, Asp133, and His137 each coordinate Mn(2+).

It belongs to the iron/manganese superoxide dismutase family. Mn(2+) is required as a cofactor.

The catalysed reaction is 2 superoxide + 2 H(+) = H2O2 + O2. Destroys superoxide anion radicals which are normally produced within the cells and which are toxic to biological systems. The protein is Superoxide dismutase [Mn] (sodA) of Mycobacterium malmoense.